We begin with the raw amino-acid sequence, 279 residues long: uncharacterized protein (279 aa).

The segment at 233-279 (NDHQLHDSPLCSDVSDSTSNNNYDESLNFSNDNNNSSFNDFDDDNFI) is disordered. Over residues 246–259 (VSDSTSNNNYDESL) the composition is skewed to polar residues. Low complexity predominate over residues 260–271 (NFSNDNNNSSFN).

This is an uncharacterized protein from Buchnera aphidicola subsp. Baizongia pistaciae (strain Bp).